The primary structure comprises 388 residues: Mannitol-1-phosphate 5-dehydrogenase (388 aa).

Ala-4–Gly-15 is a binding site for NAD(+).

This sequence belongs to the mannitol dehydrogenase family.

It catalyses the reaction D-mannitol 1-phosphate + NAD(+) = beta-D-fructose 6-phosphate + NADH + H(+). The sequence is that of Mannitol-1-phosphate 5-dehydrogenase from Thermoanaerobacter pseudethanolicus (strain ATCC 33223 / 39E) (Clostridium thermohydrosulfuricum).